Here is a 264-residue protein sequence, read N- to C-terminus: H-2 class II histocompatibility antigen, E-Q beta chain (264 aa).

Residues Met1–Leu26 form the signal peptide. Residues Val27 to Arg121 form a beta-1 region. Over Val27–Lys225 the chain is Extracellular. 2 cysteine pairs are disulfide-bonded: Cys38/Cys106 and Cys144/Cys200. The N-linked (GlcNAc...) asparagine glycan is linked to Asn46. Residues Val122–Lys225 are beta-2. The 91-residue stretch at Pro124 to Glu214 folds into the Ig-like C1-type domain. A helical membrane pass occupies residues Met226–Ile246. At Tyr247–Ser264 the chain is on the cytoplasmic side.

It belongs to the MHC class II family.

It is found in the membrane. The polypeptide is H-2 class II histocompatibility antigen, E-Q beta chain (Mus musculus (Mouse)).